A 331-amino-acid chain; its full sequence is Aromatic 2-oxoacid reductase (331 aa).

NAD(+) is bound by residues 154–155 (RI), Asp175, 205–206 (AP), Asn211, 232–234 (AAR), and Asp258. The active site involves Arg234. The active site involves Glu263. His295 functions as the Proton donor in the catalytic mechanism.

The protein belongs to the D-isomer specific 2-hydroxyacid dehydrogenase family.

It carries out the reaction (R)-3-phenyllactate + NAD(+) = 3-phenylpyruvate + NADH + H(+). The catalysed reaction is (2R)-2-hydroxy-3-(4-hydroxyphenyl)propanoate + NAD(+) = 3-(4-hydroxyphenyl)pyruvate + NADH + H(+). It catalyses the reaction 3-(indol-3-yl)lactate + NAD(+) = indole-3-pyruvate + NADH + H(+). It functions in the pathway amino-acid degradation. Functionally, essential for the reductive metabolism of L-phenylalanine, L-tyrosine and L-tryptophan. Catalyzes the conversion of phenylpyruvic acid to phenyllactic acid, 4-hydroxy-phenylpyruvic acid to 4-hydroxy-phenyllactic acid, and indolepyruvic acid to indolelactic acid. The polypeptide is Aromatic 2-oxoacid reductase (Clostridium sporogenes (strain ATCC 7955 / DSM 767 / NBRC 16411 / NCIMB 8053 / NCTC 8594 / PA 3679)).